Reading from the N-terminus, the 365-residue chain is Serine protease 40 (365 aa).

A signal peptide spans 1-34; it reads MCGIRAKKSGLGGYGAGLLAALLGVSFLSQHAQT. N-linked (GlcNAc...) asparagine glycosylation occurs at asparagine 44. A Peptidase S1 domain is found at 69–313; the sequence is IYGGQIAGAE…FDKWIKDNKK (245 aa). An intrachain disulfide couples cysteine 94 to cysteine 110. Residues histidine 109 and aspartate 159 each act as charge relay system in the active site. 3 disulfide bridges follow: cysteine 193-cysteine 270, cysteine 226-cysteine 249, and cysteine 260-cysteine 288. Serine 264 (charge relay system) is an active-site residue. Positions 312–343 are disordered; that stretch reads KKSSSNSKPGESPHHPGSPENENPEGDNKNQG.

Belongs to the peptidase S1 family. In terms of tissue distribution, expressed in testis. More specifically, abundantly expressed in the haploid round spermatid.

It localises to the cytoplasmic vesicle. Its subcellular location is the secretory vesicle. It is found in the acrosome. The protein resides in the secreted. May play an important role in the sperm/egg interaction; released during the acrosome reaction. The protein is Serine protease 40 (Prss40) of Mus musculus (Mouse).